Reading from the N-terminus, the 199-residue chain is Cytochrome c oxidase subunit 2 (199 aa).

A helical membrane pass occupies residues 1 to 13; the sequence is AICSLVLYLLTLM. Residues 14-26 lie on the Mitochondrial matrix side of the membrane; that stretch reads LMEKLSSNTVDAQ. A helical transmembrane segment spans residues 27–54; sequence EVELIWTILPAIVLILLALPSLQILYMM. Topologically, residues 55-199 are mitochondrial intermembrane; sequence DEIDEPDLTL…SSLLSASSSL (145 aa). The Cu cation site is built by histidine 128, cysteine 163, glutamate 165, cysteine 167, histidine 171, and methionine 174. Position 165 (glutamate 165) interacts with Mg(2+).

It belongs to the cytochrome c oxidase subunit 2 family. In terms of assembly, component of the cytochrome c oxidase (complex IV, CIV), a multisubunit enzyme composed of 14 subunits. The complex is composed of a catalytic core of 3 subunits MT-CO1, MT-CO2 and MT-CO3, encoded in the mitochondrial DNA, and 11 supernumerary subunits COX4I, COX5A, COX5B, COX6A, COX6B, COX6C, COX7A, COX7B, COX7C, COX8 and NDUFA4, which are encoded in the nuclear genome. The complex exists as a monomer or a dimer and forms supercomplexes (SCs) in the inner mitochondrial membrane with NADH-ubiquinone oxidoreductase (complex I, CI) and ubiquinol-cytochrome c oxidoreductase (cytochrome b-c1 complex, complex III, CIII), resulting in different assemblies (supercomplex SCI(1)III(2)IV(1) and megacomplex MCI(2)III(2)IV(2)). Found in a complex with TMEM177, COA6, COX18, COX20, SCO1 and SCO2. Interacts with TMEM177 in a COX20-dependent manner. Interacts with COX20. Interacts with COX16. The cofactor is Cu cation.

Its subcellular location is the mitochondrion inner membrane. It catalyses the reaction 4 Fe(II)-[cytochrome c] + O2 + 8 H(+)(in) = 4 Fe(III)-[cytochrome c] + 2 H2O + 4 H(+)(out). Component of the cytochrome c oxidase, the last enzyme in the mitochondrial electron transport chain which drives oxidative phosphorylation. The respiratory chain contains 3 multisubunit complexes succinate dehydrogenase (complex II, CII), ubiquinol-cytochrome c oxidoreductase (cytochrome b-c1 complex, complex III, CIII) and cytochrome c oxidase (complex IV, CIV), that cooperate to transfer electrons derived from NADH and succinate to molecular oxygen, creating an electrochemical gradient over the inner membrane that drives transmembrane transport and the ATP synthase. Cytochrome c oxidase is the component of the respiratory chain that catalyzes the reduction of oxygen to water. Electrons originating from reduced cytochrome c in the intermembrane space (IMS) are transferred via the dinuclear copper A center (CU(A)) of subunit 2 and heme A of subunit 1 to the active site in subunit 1, a binuclear center (BNC) formed by heme A3 and copper B (CU(B)). The BNC reduces molecular oxygen to 2 water molecules using 4 electrons from cytochrome c in the IMS and 4 protons from the mitochondrial matrix. The sequence is that of Cytochrome c oxidase subunit 2 (MT-CO2) from Dromaius novaehollandiae (Emu).